The sequence spans 124 residues: Glycine cleavage system H protein (124 aa).

In terms of domain architecture, Lipoyl-binding spans Leu-22–Lys-104. Lys-63 is subject to N6-lipoyllysine.

It belongs to the GcvH family. As to quaternary structure, the glycine cleavage system is composed of four proteins: P, T, L and H. It depends on (R)-lipoate as a cofactor.

In terms of biological role, the glycine cleavage system catalyzes the degradation of glycine. The H protein shuttles the methylamine group of glycine from the P protein to the T protein. The protein is Glycine cleavage system H protein of Acinetobacter baumannii (strain SDF).